A 307-amino-acid chain; its full sequence is Nitric oxide synthase-interacting protein homolog (307 aa).

The disordered stretch occupies residues 120–159 (PAMTPAHSSAAASEKPSTSSAAAAASSESSSASSISNMTN). Positions 127–155 (SSAAASEKPSTSSAAAAASSESSSASSIS) are enriched in low complexity.

Belongs to the NOSIP family.

Its subcellular location is the cytoplasm. The protein resides in the nucleus. In terms of biological role, negatively regulates nitric oxide production by inducing nitric oxide synthase translocation to actin cytoskeleton and inhibiting its enzymatic activity. This is Nitric oxide synthase-interacting protein homolog from Drosophila melanogaster (Fruit fly).